The primary structure comprises 477 residues: Glycogen synthase (477 aa).

Position 16 (Lys-16) interacts with ADP-alpha-D-glucose.

The protein belongs to the glycosyltransferase 1 family. Bacterial/plant glycogen synthase subfamily.

It catalyses the reaction [(1-&gt;4)-alpha-D-glucosyl](n) + ADP-alpha-D-glucose = [(1-&gt;4)-alpha-D-glucosyl](n+1) + ADP + H(+). The protein operates within glycan biosynthesis; glycogen biosynthesis. Functionally, synthesizes alpha-1,4-glucan chains using ADP-glucose. This chain is Glycogen synthase, found in Oceanobacillus iheyensis (strain DSM 14371 / CIP 107618 / JCM 11309 / KCTC 3954 / HTE831).